Here is a 164-residue protein sequence, read N- to C-terminus: Crossover junction endodeoxyribonuclease RuvC (164 aa).

Catalysis depends on residues Asp-7, Glu-67, and Asp-140. 3 residues coordinate Mg(2+): Asp-7, Glu-67, and Asp-140.

This sequence belongs to the RuvC family. As to quaternary structure, homodimer which binds Holliday junction (HJ) DNA. The HJ becomes 2-fold symmetrical on binding to RuvC with unstacked arms; it has a different conformation from HJ DNA in complex with RuvA. In the full resolvosome a probable DNA-RuvA(4)-RuvB(12)-RuvC(2) complex forms which resolves the HJ. Mg(2+) serves as cofactor.

It localises to the cytoplasm. It carries out the reaction Endonucleolytic cleavage at a junction such as a reciprocal single-stranded crossover between two homologous DNA duplexes (Holliday junction).. Its function is as follows. The RuvA-RuvB-RuvC complex processes Holliday junction (HJ) DNA during genetic recombination and DNA repair. Endonuclease that resolves HJ intermediates. Cleaves cruciform DNA by making single-stranded nicks across the HJ at symmetrical positions within the homologous arms, yielding a 5'-phosphate and a 3'-hydroxyl group; requires a central core of homology in the junction. The consensus cleavage sequence is 5'-(A/T)TT(C/G)-3'. Cleavage occurs on the 3'-side of the TT dinucleotide at the point of strand exchange. HJ branch migration catalyzed by RuvA-RuvB allows RuvC to scan DNA until it finds its consensus sequence, where it cleaves and resolves the cruciform DNA. This is Crossover junction endodeoxyribonuclease RuvC from Alkaliphilus oremlandii (strain OhILAs) (Clostridium oremlandii (strain OhILAs)).